The following is a 143-amino-acid chain: Small ribosomal subunit protein eS12 (143 aa).

Belongs to the eukaryotic ribosomal protein eS12 family.

The chain is Small ribosomal subunit protein eS12 (RPS12) from Hordeum vulgare (Barley).